A 322-amino-acid polypeptide reads, in one-letter code: MMESGEALLKKLDGRLSGLRGRLTPDTGMDKITWFRAGGPAQVLFQPSDEEDLSAFLKAVPEEIPLLVVGIGSNLLVRDGGVPGFVVRLSAKGFGEVEQVCDTQLRAGAAAPDKRVAAAALEAGLAGFHFYHGIPGGVGGALRMNAGANGVETRERVVEVRALDRKGEVHVLSNADMGYAYRHSSASPDLIFTSVLFEGVPGERDDIRRAMDEVQHHRETVQPVREKTGGSTFKNPEGTSAWKEIDKAGCRGLRVGGAQMSEMHCNFMINTGNATGHDLETLGETVRARVFENSGIRLHWEIKRLGLFREGEQIEEFLGKII.

Residues Arg-36 to Gly-202 enclose the FAD-binding PCMH-type domain. Residue Arg-182 is part of the active site. Residue Ser-231 is the Proton donor of the active site. Residue Glu-301 is part of the active site.

This sequence belongs to the MurB family. It depends on FAD as a cofactor.

Its subcellular location is the cytoplasm. The catalysed reaction is UDP-N-acetyl-alpha-D-muramate + NADP(+) = UDP-N-acetyl-3-O-(1-carboxyvinyl)-alpha-D-glucosamine + NADPH + H(+). It functions in the pathway cell wall biogenesis; peptidoglycan biosynthesis. Cell wall formation. The sequence is that of UDP-N-acetylenolpyruvoylglucosamine reductase from Brucella suis biovar 1 (strain 1330).